Here is a 237-residue protein sequence, read N- to C-terminus: Phosphoribosylaminoimidazole-succinocarboxamide synthase (237 aa).

Belongs to the SAICAR synthetase family.

The enzyme catalyses 5-amino-1-(5-phospho-D-ribosyl)imidazole-4-carboxylate + L-aspartate + ATP = (2S)-2-[5-amino-1-(5-phospho-beta-D-ribosyl)imidazole-4-carboxamido]succinate + ADP + phosphate + 2 H(+). The protein operates within purine metabolism; IMP biosynthesis via de novo pathway; 5-amino-1-(5-phospho-D-ribosyl)imidazole-4-carboxamide from 5-amino-1-(5-phospho-D-ribosyl)imidazole-4-carboxylate: step 1/2. This Escherichia coli O7:K1 (strain IAI39 / ExPEC) protein is Phosphoribosylaminoimidazole-succinocarboxamide synthase.